A 144-amino-acid chain; its full sequence is Large ribosomal subunit protein uL15 (144 aa).

Residues 1–48 (MQLNNLKPADGSKHAKRRVGRGIGSGLGKTAGRGHKGQKSRSGGFHKV) are disordered. Residues 21-31 (RGIGSGLGKTA) are compositionally biased toward gly residues.

It belongs to the universal ribosomal protein uL15 family. As to quaternary structure, part of the 50S ribosomal subunit.

In terms of biological role, binds to the 23S rRNA. The polypeptide is Large ribosomal subunit protein uL15 (Cupriavidus metallidurans (strain ATCC 43123 / DSM 2839 / NBRC 102507 / CH34) (Ralstonia metallidurans)).